The sequence spans 375 residues: tRNA-specific 2-thiouridylase MnmA (375 aa).

Residues 16–23 (GMSGGVDS) and Met42 contribute to the ATP site. The interval 102 to 104 (NPD) is interaction with target base in tRNA. Cys107 serves as the catalytic Nucleophile. A disulfide bridge connects residues Cys107 and Cys203. Gly131 is an ATP binding site. The interaction with tRNA stretch occupies residues 153–155 (KDQ). Cys203 (cysteine persulfide intermediate) is an active-site residue. The interaction with tRNA stretch occupies residues 315-316 (RY).

Belongs to the MnmA/TRMU family.

Its subcellular location is the cytoplasm. It catalyses the reaction S-sulfanyl-L-cysteinyl-[protein] + uridine(34) in tRNA + AH2 + ATP = 2-thiouridine(34) in tRNA + L-cysteinyl-[protein] + A + AMP + diphosphate + H(+). Its function is as follows. Catalyzes the 2-thiolation of uridine at the wobble position (U34) of tRNA, leading to the formation of s(2)U34. The protein is tRNA-specific 2-thiouridylase MnmA of Pseudomonas aeruginosa (strain LESB58).